The sequence spans 382 residues: uncharacterized protein (382 aa).

Transmembrane regions (helical) follow at residues 14 to 34 (GLLLLTLAIAVLNTLVPLWLA), 45 to 65 (VVSSSYFTGNLVGTLLTGYVI), 79 to 99 (FIFAAGCAGLGLMIGFWSWLA), 102 to 122 (FVAGIGCAMIWVVVESALMCS), 131 to 151 (LLAAYMMVYYVGTFLGQLLVS), 157 to 177 (LMSVLPWVTGLTLAGILPLLF), 204 to 224 (LGVNGCIISGIVLGSLYGLMP), 235 to 255 (ASIGFWMAVLVSAGILGQWPI), 270 to 290 (VQVFVVILGSIAMLSQAAMAP), 291 to 311 (ALFILGAAGFTLYPVAMAWAC), 325 to 345 (ALLLSYTVGSLLGPSFTAMLM), and 348 to 368 (FSDNLLFIMIASVSFIYLLML).

The protein belongs to the major facilitator superfamily. YcaD (TC 2.A.1.26) family.

Its subcellular location is the cell inner membrane. This is an uncharacterized protein from Escherichia coli O6:K15:H31 (strain 536 / UPEC).